The primary structure comprises 138 residues: ATP synthase epsilon chain (138 aa).

Belongs to the ATPase epsilon chain family. As to quaternary structure, F-type ATPases have 2 components, CF(1) - the catalytic core - and CF(0) - the membrane proton channel. CF(1) has five subunits: alpha(3), beta(3), gamma(1), delta(1), epsilon(1). CF(0) has three main subunits: a, b and c.

It is found in the cell membrane. In terms of biological role, produces ATP from ADP in the presence of a proton gradient across the membrane. This is ATP synthase epsilon chain (atpC) from Buchnera aphidicola subsp. Acyrthosiphon pisum (strain APS) (Acyrthosiphon pisum symbiotic bacterium).